Here is a 352-residue protein sequence, read N- to C-terminus: tRNA pseudouridine synthase D (352 aa).

Residue Asp-81 is the Nucleophile of the active site. Positions 157-303 (GIPNYFGVQR…MEHERRILRL (147 aa)) constitute a TRUD domain.

This sequence belongs to the pseudouridine synthase TruD family.

It catalyses the reaction uridine(13) in tRNA = pseudouridine(13) in tRNA. In terms of biological role, responsible for synthesis of pseudouridine from uracil-13 in transfer RNAs. The protein is tRNA pseudouridine synthase D of Pseudomonas syringae pv. tomato (strain ATCC BAA-871 / DC3000).